An 87-amino-acid chain; its full sequence is Mitotic-spindle organizing protein 1 (87 aa).

It belongs to the MOZART1 family. In terms of assembly, part of the gamma-tubulin complex.

It is found in the cytoplasm. Its subcellular location is the cytoskeleton. The protein resides in the microtubule organizing center. The protein localises to the spindle pole body. In terms of biological role, required for gamma-tubulin complex recruitment to the microtubule organizing center (MTOC). This chain is Mitotic-spindle organizing protein 1, found in Chaetomium globosum (strain ATCC 6205 / CBS 148.51 / DSM 1962 / NBRC 6347 / NRRL 1970) (Soil fungus).